The chain runs to 242 residues: Probable transcriptional regulatory protein EUBREC_1961 (242 aa).

Belongs to the TACO1 family.

It is found in the cytoplasm. The protein is Probable transcriptional regulatory protein EUBREC_1961 of Agathobacter rectalis (strain ATCC 33656 / DSM 3377 / JCM 17463 / KCTC 5835 / VPI 0990) (Eubacterium rectale).